The primary structure comprises 343 residues: Protein RecA (343 aa).

Residue 65 to 72 participates in ATP binding; it reads GPESSGKT.

Belongs to the RecA family.

It is found in the cytoplasm. In terms of biological role, can catalyze the hydrolysis of ATP in the presence of single-stranded DNA, the ATP-dependent uptake of single-stranded DNA by duplex DNA, and the ATP-dependent hybridization of homologous single-stranded DNAs. It interacts with LexA causing its activation and leading to its autocatalytic cleavage. In Xanthomonas campestris pv. campestris (strain 8004), this protein is Protein RecA.